The chain runs to 438 residues: MSPFLGGWLFFCMLLPFSPGVQGAQEYPHVTPEQIHLSYLGEPGTMTVTWTTWAPARSEVQFGSQLSGPLPFRAHGTARAFVDGGVLRRKLYIHRVTLRKLQPGAQYVYRCGSSQGWSRRFRFTALKNGVHWSPRLAVFGDMGADNPKALPRLRRDTQQGMFDAVLHVGDFAYNMDQDNARVGDRFMRLIEPVAASLPYMTCPGNHEQRYNFSNYKARFSMPGDNEGLWYSWDLGPAHIISFSTEVYFFLHYGRHLIEKQFRWLENDLQKANKNRVARPWIITMGHRPMYCSNADLDDCTRHESRVRKGLHGKLFGLEDLFHKYGVDLEFWAHEHSYERLWPIYNYQVFNGSLESPYTNPRGPVHIITGSAGCEELLTPFVRKPRPWSAVRVKEYGYTRMHILNGTHMHIQQVSDDQDGKIVDDVWVVRPLLGRMMYH.

A signal peptide spans 1–23 (MSPFLGGWLFFCMLLPFSPGVQG). Positions 141, 170, and 173 each coordinate Fe cation. Residue Asp170 participates in Zn(2+) binding. A Zn(2+)-binding site is contributed by Asn205. Residue Asn211 is glycosylated (N-linked (GlcNAc...) asparagine). Zn(2+) contacts are provided by His286 and His333. A Fe cation-binding site is contributed by His335. N-linked (GlcNAc...) asparagine glycosylation is found at Asn350 and Asn404.

Belongs to the metallophosphoesterase superfamily. Purple acid phosphatase family. It depends on Fe cation as a cofactor. Requires Zn(2+) as cofactor.

It localises to the secreted. It catalyses the reaction a phosphate monoester + H2O = an alcohol + phosphate. The protein is Acid phosphatase type 7 of Mus musculus (Mouse).